The sequence spans 277 residues: Probable endonuclease 4 (277 aa).

Residues His67, His107, Glu142, Asp176, His179, His211, Asp224, His226, and Glu256 each coordinate Zn(2+).

This sequence belongs to the AP endonuclease 2 family. Zn(2+) serves as cofactor.

The catalysed reaction is Endonucleolytic cleavage to 5'-phosphooligonucleotide end-products.. Its function is as follows. Endonuclease IV plays a role in DNA repair. It cleaves phosphodiester bonds at apurinic or apyrimidinic (AP) sites, generating a 3'-hydroxyl group and a 5'-terminal sugar phosphate. In Clostridium botulinum (strain Alaska E43 / Type E3), this protein is Probable endonuclease 4.